We begin with the raw amino-acid sequence, 244 residues long: Nicotinamidase 1 (244 aa).

The protein belongs to the isochorismatase family. As to expression, expressed in roots and stems, and at lower levels in flowers, siliques and leaves.

The enzyme catalyses nicotinamide + H2O = nicotinate + NH4(+). It functions in the pathway cofactor biosynthesis; nicotinate biosynthesis; nicotinate from nicotinamide: step 1/1. Functionally, catalyzes the deamidation of nicotinamide, an early step in the NAD(+) salvage pathway. Prevents the accumulation of intracellular nicotinamide, a known inhibitor of poly(ADP-ribose) polymerases (PARP enzymes). The chain is Nicotinamidase 1 from Arabidopsis thaliana (Mouse-ear cress).